The primary structure comprises 424 residues: tRNA modification GTPase MnmE (424 aa).

3 residues coordinate (6S)-5-formyl-5,6,7,8-tetrahydrofolate: arginine 20, glutamate 77, and arginine 117. The 140-residue stretch at glycine 212 to arginine 351 folds into the TrmE-type G domain. Asparagine 222 is a K(+) binding site. GTP is bound by residues asparagine 222–threonine 227, serine 241–threonine 247, and aspartate 266–glycine 269. Serine 226 is a Mg(2+) binding site. K(+) contacts are provided by serine 241, isoleucine 243, and threonine 246. Threonine 247 contacts Mg(2+). Residue lysine 424 coordinates (6S)-5-formyl-5,6,7,8-tetrahydrofolate.

It belongs to the TRAFAC class TrmE-Era-EngA-EngB-Septin-like GTPase superfamily. TrmE GTPase family. Homodimer. Heterotetramer of two MnmE and two MnmG subunits. K(+) is required as a cofactor.

It localises to the cytoplasm. In terms of biological role, exhibits a very high intrinsic GTPase hydrolysis rate. Involved in the addition of a carboxymethylaminomethyl (cmnm) group at the wobble position (U34) of certain tRNAs, forming tRNA-cmnm(5)s(2)U34. This chain is tRNA modification GTPase MnmE, found in Erythrobacter litoralis (strain HTCC2594).